The following is a 286-amino-acid chain: Ribosomal RNA small subunit methyltransferase A (286 aa).

S-adenosyl-L-methionine contacts are provided by Asn-28, Leu-30, Gly-55, Glu-77, Asp-103, and Asn-123.

It belongs to the class I-like SAM-binding methyltransferase superfamily. rRNA adenine N(6)-methyltransferase family. RsmA subfamily.

The protein localises to the cytoplasm. The enzyme catalyses adenosine(1518)/adenosine(1519) in 16S rRNA + 4 S-adenosyl-L-methionine = N(6)-dimethyladenosine(1518)/N(6)-dimethyladenosine(1519) in 16S rRNA + 4 S-adenosyl-L-homocysteine + 4 H(+). Its function is as follows. Specifically dimethylates two adjacent adenosines (A1518 and A1519) in the loop of a conserved hairpin near the 3'-end of 16S rRNA in the 30S particle. May play a critical role in biogenesis of 30S subunits. This Bradyrhizobium sp. (strain BTAi1 / ATCC BAA-1182) protein is Ribosomal RNA small subunit methyltransferase A.